The sequence spans 538 residues: Anti-bacteriophage protein A (538 aa).

Interacts with AbpB.

Its function is as follows. Part of an antiviral system composed of AbpA and AbpB; when both are expressed from a plasmid they confer resistance to phages T2, T4, T7 and lambda but not RB32 or RB69. Resistance is temperature dependent, it can be seen at 30 degrees Celsius but not at 37 or 42 degrees Celsius. The system impairs phage but not bacterial DNA synthesis (shown for T4, T7 and lambda). Partially suppressed by mutations in T4 gene 41, a replicative helicase. This Escherichia coli (strain K12) protein is Anti-bacteriophage protein A.